Reading from the N-terminus, the 127-residue chain is Fluoride-specific ion channel FluC (127 aa).

The next 4 helical transmembrane spans lie at isoleucine 4 to leucine 24, valine 35 to phenylalanine 55, threonine 71 to leucine 91, and leucine 101 to phenylalanine 121. The Na(+) site is built by glycine 75 and threonine 78.

The protein belongs to the fluoride channel Fluc/FEX (TC 1.A.43) family.

It localises to the cell inner membrane. The enzyme catalyses fluoride(in) = fluoride(out). Na(+) is not transported, but it plays an essential structural role and its presence is essential for fluoride channel function. In terms of biological role, fluoride-specific ion channel. Important for reducing fluoride concentration in the cell, thus reducing its toxicity. The sequence is that of Fluoride-specific ion channel FluC from Cronobacter sakazakii (strain ATCC BAA-894) (Enterobacter sakazakii).